The sequence spans 257 residues: Diphthine synthase (257 aa).

Residues leucine 9, aspartate 85, valine 88, 113-114 (SI), leucine 164, alanine 209, and histidine 234 contribute to the S-adenosyl-L-methionine site.

Belongs to the diphthine synthase family. As to quaternary structure, homodimer.

It carries out the reaction 2-[(3S)-amino-3-carboxypropyl]-L-histidyl-[translation elongation factor 2] + 3 S-adenosyl-L-methionine = diphthine-[translation elongation factor 2] + 3 S-adenosyl-L-homocysteine + 3 H(+). It participates in protein modification; peptidyl-diphthamide biosynthesis. S-adenosyl-L-methionine-dependent methyltransferase that catalyzes the trimethylation of the amino group of the modified target histidine residue in translation elongation factor 2 (EF-2), to form an intermediate called diphthine. The three successive methylation reactions represent the second step of diphthamide biosynthesis. The polypeptide is Diphthine synthase (Methanocaldococcus jannaschii (strain ATCC 43067 / DSM 2661 / JAL-1 / JCM 10045 / NBRC 100440) (Methanococcus jannaschii)).